The following is a 269-amino-acid chain: Type II iodothyronine deiodinase (269 aa).

Residues 1–7 (MGLLSVD) lie on the Lumenal side of the membrane. The helical; Signal-anchor for type III membrane protein transmembrane segment at 8–28 (LLITLQILPWFFSNCLFLALY) threads the bilayer. The Cytoplasmic portion of the chain corresponds to 29–269 (DSVVLLKHVI…RUVPTCELIM (241 aa)). Sec128 is an active-site residue. 2 non-standard amino acids (selenocysteine) are found at residues Sec128 and Sec261.

Belongs to the iodothyronine deiodinase family. As to quaternary structure, predominantly monomer. Can form homodimers but homodimerization is not essential for enzyme activity.

It is found in the endoplasmic reticulum membrane. It carries out the reaction 3,3',5-triiodo-L-thyronine + iodide + A + H(+) = L-thyroxine + AH2. The enzyme catalyses 3,3'-diiodo-L-thyronine + iodide + A + H(+) = 3,3',5'-triiodo-L-thyronine + AH2. The catalysed reaction is 3'-iodo-L-thyronine + iodide + A + H(+) = 3',5'-diiodo-L-thyronine + AH2. It catalyses the reaction 3,3'-diiodothyronamine + iodide + A + H(+) = 3,3',5'-triiodothyronamine + AH2. It carries out the reaction 3'-iodothyronamine + iodide + A + H(+) = 3',5'-diiodothyronamine + AH2. Plays a crucial role in the metabolism of thyroid hormones (TH) and has specific roles in TH activation and inactivation by deiodination. Catalyzes the deiodination of L-thyroxine (T4) to 3,5,3'-triiodothyronine (T3), 3,3',5'-triiodothyronine (rT3) to 3,3'-diiodothyronine (3,3'-T2) and 3',5'-diiodothyronine (3',5'-T2) to 3'-monoiodothyronine (3'-T1) via outer-ring deiodination (ORD). Catalyzes the phenolic ring deiodinations of 3,3',5'-triiodothyronamine and 3',5'- diiodothyronamine. This chain is Type II iodothyronine deiodinase (dio2), found in Neoceratodus forsteri (Australian lungfish).